The chain runs to 428 residues: Enolase (428 aa).

Q163 is a (2R)-2-phosphoglycerate binding site. E205 (proton donor) is an active-site residue. Positions 242, 285, and 312 each coordinate Mg(2+). K337, R366, S367, and K388 together coordinate (2R)-2-phosphoglycerate. The active-site Proton acceptor is K337.

Belongs to the enolase family. It depends on Mg(2+) as a cofactor.

It is found in the cytoplasm. Its subcellular location is the secreted. The protein resides in the cell surface. The enzyme catalyses (2R)-2-phosphoglycerate = phosphoenolpyruvate + H2O. The protein operates within carbohydrate degradation; glycolysis; pyruvate from D-glyceraldehyde 3-phosphate: step 4/5. In terms of biological role, catalyzes the reversible conversion of 2-phosphoglycerate (2-PG) into phosphoenolpyruvate (PEP). It is essential for the degradation of carbohydrates via glycolysis. The sequence is that of Enolase from Neisseria meningitidis serogroup B (strain ATCC BAA-335 / MC58).